A 432-amino-acid chain; its full sequence is Probable pectate lyase 22 (432 aa).

The N-terminal stretch at 1 to 45 (MFRPNSLLIPSNLSTTKSQRNTMLNSSYLSFALIFFCCILFSALA) is a signal peptide. Residue N65 is glycosylated (N-linked (GlcNAc...) asparagine). D228, D252, and D256 together coordinate Ca(2+). R308 is a catalytic residue.

It belongs to the polysaccharide lyase 1 family. Ca(2+) serves as cofactor.

It carries out the reaction Eliminative cleavage of (1-&gt;4)-alpha-D-galacturonan to give oligosaccharides with 4-deoxy-alpha-D-galact-4-enuronosyl groups at their non-reducing ends.. The protein operates within glycan metabolism; pectin degradation; 2-dehydro-3-deoxy-D-gluconate from pectin: step 2/5. The protein is Probable pectate lyase 22 of Arabidopsis thaliana (Mouse-ear cress).